Consider the following 358-residue polypeptide: Arginine kinase (358 aa).

One can recognise a Phosphagen kinase N-terminal domain in the interval 6-88 (SVEELWAKLD…LDAVIKEYHK (83 aa)). Position 61-65 (61-65 (GVGIY)) interacts with substrate. The region spanning 116–353 (YIVSTRVRVG…EACLAKEKEL (238 aa)) is the Phosphagen kinase C-terminal domain. ATP contacts are provided by residues 119–123 (STRVR) and H182. Position 222 (E222) interacts with substrate. Position 226 (R226) interacts with ATP. C269 contacts substrate. ATP is bound by residues 278-282 (RASVH) and 306-311 (RGIHGE). Position 311 (E311) interacts with substrate.

The protein belongs to the ATP:guanido phosphotransferase family. In terms of assembly, monomer.

It carries out the reaction L-arginine + ATP = N(omega)-phospho-L-arginine + ADP + H(+). The chain is Arginine kinase from Haliotis madaka (Giant abalone).